The chain runs to 190 residues: MLPESFFLNDDVLYLAKELLGHVLVTHLEGQRTSGIIIETEAYRGPEDKACHAYNYRKTQRNLPMYSRGGIAYIYRCYGMHSLFNVVTGHQDLPHAVLIRAILPYEGEDIMVLRRQWQNKPKHLLTNGPGKVCQALNLTLEYNTHSLSSPQIHISKKKFSGTITQKPRIGIDYAQEYRDLPWRFLLHIKN.

It belongs to the DNA glycosylase MPG family.

The sequence is that of Putative 3-methyladenine DNA glycosylase from Chlamydia abortus (strain DSM 27085 / S26/3) (Chlamydophila abortus).